Reading from the N-terminus, the 386-residue chain is Lipid-A-disaccharide synthase (386 aa).

The protein belongs to the LpxB family.

It carries out the reaction a lipid X + a UDP-2-N,3-O-bis[(3R)-3-hydroxyacyl]-alpha-D-glucosamine = a lipid A disaccharide + UDP + H(+). It participates in bacterial outer membrane biogenesis; LPS lipid A biosynthesis. Its function is as follows. Condensation of UDP-2,3-diacylglucosamine and 2,3-diacylglucosamine-1-phosphate to form lipid A disaccharide, a precursor of lipid A, a phosphorylated glycolipid that anchors the lipopolysaccharide to the outer membrane of the cell. The sequence is that of Lipid-A-disaccharide synthase from Chromohalobacter salexigens (strain ATCC BAA-138 / DSM 3043 / CIP 106854 / NCIMB 13768 / 1H11).